The primary structure comprises 421 residues: Gamma-glutamyl phosphate reductase (421 aa).

Belongs to the gamma-glutamyl phosphate reductase family.

It is found in the cytoplasm. It catalyses the reaction L-glutamate 5-semialdehyde + phosphate + NADP(+) = L-glutamyl 5-phosphate + NADPH + H(+). Its pathway is amino-acid biosynthesis; L-proline biosynthesis; L-glutamate 5-semialdehyde from L-glutamate: step 2/2. Catalyzes the NADPH-dependent reduction of L-glutamate 5-phosphate into L-glutamate 5-semialdehyde and phosphate. The product spontaneously undergoes cyclization to form 1-pyrroline-5-carboxylate. The protein is Gamma-glutamyl phosphate reductase of Leifsonia xyli subsp. xyli (strain CTCB07).